The primary structure comprises 256 residues: uncharacterized protein (256 aa).

3 helical membrane-spanning segments follow: residues 42 to 62, 73 to 93, and 108 to 128; these read LIAL…IWFF, FFTL…LIFL, and WLFL…WLIV.

Its subcellular location is the cell membrane. This is an uncharacterized protein from Mycoplasma genitalium (strain ATCC 33530 / DSM 19775 / NCTC 10195 / G37) (Mycoplasmoides genitalium).